The chain runs to 389 residues: UDP-N-acetylglucosamine--N-acetylmuramyl-(pentapeptide) pyrophosphoryl-undecaprenol N-acetylglucosamine transferase (389 aa).

UDP-N-acetyl-alpha-D-glucosamine contacts are provided by residues 17–19 (TAG), asparagine 137, arginine 179, serine 213, and glutamine 308.

This sequence belongs to the glycosyltransferase 28 family. MurG subfamily.

The protein resides in the cell membrane. It carries out the reaction di-trans,octa-cis-undecaprenyl diphospho-N-acetyl-alpha-D-muramoyl-L-alanyl-D-glutamyl-meso-2,6-diaminopimeloyl-D-alanyl-D-alanine + UDP-N-acetyl-alpha-D-glucosamine = di-trans,octa-cis-undecaprenyl diphospho-[N-acetyl-alpha-D-glucosaminyl-(1-&gt;4)]-N-acetyl-alpha-D-muramoyl-L-alanyl-D-glutamyl-meso-2,6-diaminopimeloyl-D-alanyl-D-alanine + UDP + H(+). It functions in the pathway cell wall biogenesis; peptidoglycan biosynthesis. Functionally, cell wall formation. Catalyzes the transfer of a GlcNAc subunit on undecaprenyl-pyrophosphoryl-MurNAc-pentapeptide (lipid intermediate I) to form undecaprenyl-pyrophosphoryl-MurNAc-(pentapeptide)GlcNAc (lipid intermediate II). The sequence is that of UDP-N-acetylglucosamine--N-acetylmuramyl-(pentapeptide) pyrophosphoryl-undecaprenol N-acetylglucosamine transferase from Rhodococcus erythropolis (strain PR4 / NBRC 100887).